Reading from the N-terminus, the 216-residue chain is Probable ubiquitin-conjugating enzyme E2 ECU01_1010 (216 aa).

Basic residues predominate over residues M1 to L10. Residues M1–S29 form a disordered region. In terms of domain architecture, UBC core spans S29–E196. The active-site Glycyl thioester intermediate is the C120.

It belongs to the ubiquitin-conjugating enzyme family.

It carries out the reaction S-ubiquitinyl-[E1 ubiquitin-activating enzyme]-L-cysteine + [E2 ubiquitin-conjugating enzyme]-L-cysteine = [E1 ubiquitin-activating enzyme]-L-cysteine + S-ubiquitinyl-[E2 ubiquitin-conjugating enzyme]-L-cysteine.. It participates in protein modification; protein ubiquitination. Catalyzes the covalent attachment of ubiquitin to other proteins so as to signal them for selective protein degradation. Involved in the formation of multiubiquitin chains. In Encephalitozoon cuniculi (strain GB-M1) (Microsporidian parasite), this protein is Probable ubiquitin-conjugating enzyme E2 ECU01_1010.